The following is a 2599-amino-acid chain: Protein DOP1 homolog (2599 aa).

Disordered regions lie at residues 532–571 and 595–701; these read EQSG…SDSR and ASNQ…LDEE. Composition is skewed to polar residues over residues 534 to 549, 595 to 604, and 625 to 636; these read SGGS…NSAS, ASNQSVGRQS, and ASDTGQQSSSDL. At Ser-753 the chain carries Phosphoserine. The segment covering 1240–1251 has biased composition (basic and acidic residues); the sequence is PRIEIPHKETPL. 2 disordered regions span residues 1240–1316 and 1347–1368; these read PRIE…SSSA and TYRL…EQKD. A compositionally biased stretch (polar residues) spans 1264-1282; the sequence is QPSQEQPANQPDNSLQYDQ. Positions 1297-1309 are enriched in basic and acidic residues; sequence SELRETSIEKEDS. Thr-1355 carries the post-translational modification Phosphothreonine. A phosphoserine mark is found at Ser-1360, Ser-1363, and Ser-1371. A disordered region spans residues 1409–1442; sequence CISKTSTDSNISGSHVEQPEQEEETEPGTESTIN. Polar residues predominate over residues 1410 to 1423; that stretch reads ISKTSTDSNISGSH. Ser-2525 is modified (phosphoserine).

Belongs to the DOP1 family.

It localises to the golgi apparatus membrane. Its function is as follows. May be involved in protein traffic between late Golgi and early endosomes. The sequence is that of Protein DOP1 homolog from Drosophila melanogaster (Fruit fly).